The sequence spans 501 residues: Aldehyde dehydrogenase, cytosolic 1 (501 aa).

Gly246–Gly251 contributes to the NAD(+) binding site. Glu269 functions as the Proton acceptor in the catalytic mechanism. The Nucleophile role is filled by Cys303.

This sequence belongs to the aldehyde dehydrogenase family. As to quaternary structure, homotetramer. As to expression, eye specific, with very high expression in the lens.

Its subcellular location is the cytoplasm. It catalyses the reaction an aldehyde + NAD(+) + H2O = a carboxylate + NADH + 2 H(+). Its pathway is alcohol metabolism; ethanol degradation; acetate from ethanol: step 2/2. Its function is as follows. Major component of the eye of elephant shrews, which in contrast to other mammals, possesses both a lens- and a non-lens class-1 aldehyde dehydrogenase 1. This eye-specific form is a structural protein of the lens and, in other part of the eye, serves as the major form of ALDH1. Can convert/oxidize retinaldehyde to retinoic acid. The polypeptide is Aldehyde dehydrogenase, cytosolic 1 (ALDH1) (Elephantulus edwardii (Cape long-eared elephant shrew)).